Consider the following 284-residue polypeptide: Averufin oxidase A (284 aa).

An N-terminal signal peptide occupies residues Met-1 to Ala-23. Residues Asn-62, Asn-86, and Asn-190 are each glycosylated (N-linked (GlcNAc...) asparagine).

Belongs to the avfA family.

It participates in mycotoxin biosynthesis. Its function is as follows. Averufin oxidase A; part of the fragmented gene cluster that mediates the biosynthesis of dothistromin (DOTH), a polyketide toxin very similar in structure to the aflatoxin precursor, versicolorin B. The first step of the pathway is the conversion of acetate to norsolorinic acid (NOR) and requires the fatty acid synthase subunits hexA and hexB, as well as the polyketide synthase pksA. PksA combines a hexanoyl starter unit and 7 malonyl-CoA extender units to synthesize the precursor NOR. The hexanoyl starter unit is provided to the acyl-carrier protein (ACP) domain by the fungal fatty acid synthase hexA/hexB. The second step is the conversion of NOR to averantin (AVN) and requires the norsolorinic acid ketoreductase nor1, which catalyzes the dehydration of norsolorinic acid to form (1'S)-averantin. The cytochrome P450 monooxygenase avnA then catalyzes the hydroxylation of AVN to 5'hydroxyaverantin (HAVN). The next step is performed by adhA that transforms HAVN to averufin (AVF). Averufin might then be converted to hydroxyversicolorone by cypX and avfA. Hydroxyversicolorone is further converted versiconal hemiacetal acetate (VHA) by moxY. VHA is then the substrate for the versiconal hemiacetal acetate esterase est1 to yield versiconal (VAL). Versicolorin B synthase vbsA then converts VAL to versicolorin B (VERB) by closing the bisfuran ring. Then, the activity of the versicolorin B desaturase verB leads to versicolorin A (VERA). DotB, a predicted chloroperoxidase, may perform epoxidation of the A-ring of VERA. Alternatively, a cytochrome P450, such as cypX or avnA could catalyze this step. It is also possible that another, uncharacterized, cytochrome P450 enzyme is responsible for this step. Opening of the epoxide could potentially be achieved by the epoxide hydrolase epoA. However, epoA seems not to be required for DOTH biosynthesis, but other epoxide hydrolases may have the ability to complement this hydrolysis. Alternatively, opening of the epoxide ring could be achieved non-enzymatically. The next step is the deoxygenation of ring A to yield the 5,8-dihydroxyanthraquinone which is most likely catalyzed by the NADPH dehydrogenase encoded by ver1. The last stages of DOTH biosynthesis are proposed to involve hydroxylation of the bisfuran. OrdB and norB might have oxidative roles here. An alternative possibility is that cytochrome P450 monoogenases such as avnA and cypX might perform these steps in addition to previously proposed steps. The chain is Averufin oxidase A from Dothistroma septosporum (strain NZE10 / CBS 128990) (Red band needle blight fungus).